A 310-amino-acid chain; its full sequence is MDSAAAAAAKRVQIEKAHNFMRQYRDPESRELKKLSANQFMDVWAHYDKDGNGYIEGTELDGFLREFVSSANATDISPEAVTDTMLEELKSCFMEAYDDNQDGKIDIRELAQLLPMEENFLLLFRFDNPLESSVEFMKIWREYDTDNSGYIEADELKNFLRDLLKEAKKINDVSEDKLIEYTDTMLQVFDANKDGRLQLSEMAKLLPVKENFLCRQVFKGATKLTKEDIEKVFSLYDRDNSGTIENEELKGFLKDLLELVKKDDYDAQDLAAFEETIMRGVGTDKHGKISRKELTMILLTLAKISPDDEE.

6 EF-hand domains span residues 35–70, 84–120, 131–166, 177–212, 224–259, and 283–304; these read LSAN…FVSS, TMLE…EENF, ESSV…LLKE, KLIE…KENF, LTKE…LLEL, and TDKH…LAKI. 25 residues coordinate Ca(2+): Asp48, Asp50, Asn52, Tyr54, Glu59, Asp98, Asn100, Asp102, Lys104, Glu109, Asp144, Asp146, Ser148, Tyr150, Glu155, Asp190, Asn192, Asp194, Arg196, Glu201, Asp237, Asp239, Ser241, Thr243, and Glu248.

It belongs to the calbindin family. In terms of tissue distribution, expressed in a large number of neuron of the brain and the thoracic ganglion as well as in two small muscles of the thorax.

The protein is Calbindin-32 (Cbp53E) of Drosophila melanogaster (Fruit fly).